The primary structure comprises 484 residues: Sialidase-4 (484 aa).

Residues 22-25 carry the FRIP motif motif; that stretch reads YRVP. Positions 23 and 43 each coordinate substrate. Active-site proton acceptor residues include Asp-47 and Asp-48. Residues 127-138 form a BNR 1 repeat; that stretch reads VASRDAGLSWGS. The substrate site is built by Tyr-177 and Tyr-179. Residues 200-211 form a BNR 2 repeat; that stretch reads FYSDDHGRTWRC. 2 residues coordinate substrate: Glu-222 and Arg-242. A BNR 3 repeat occupies 251 to 262; that stretch reads ALSTDEGTSFLP. The tract at residues 284–357 is disordered; it reads PAPAPNRPRD…GPRPGVSGDV (74 aa). Residues 336–345 show a composition bias toward low complexity; the sequence is RLQPRGDGPR. Arg-389 contributes to the substrate binding site. Tyr-419 (nucleophile) is an active-site residue. Glu-440 is an active-site residue.

Belongs to the glycosyl hydrolase 33 family. Post-translationally, N-glycosylated. As to expression, predominant form in liver. Also expressed in brain, kidney and colon. Highly expressed in brain and at lower levels in kidney and liver.

It is found in the cell membrane. The protein resides in the endoplasmic reticulum membrane. Its subcellular location is the microsome membrane. The protein localises to the mitochondrion membrane. It localises to the cell projection. It is found in the neuron projection. The protein resides in the mitochondrion inner membrane. Its subcellular location is the mitochondrion outer membrane. The protein localises to the lysosome lumen. The catalysed reaction is Hydrolysis of alpha-(2-&gt;3)-, alpha-(2-&gt;6)-, alpha-(2-&gt;8)- glycosidic linkages of terminal sialic acid residues in oligosaccharides, glycoproteins, glycolipids, colominic acid and synthetic substrates.. It catalyses the reaction a ganglioside GM3 + H2O = a beta-D-galactosyl-(1-&gt;4)-beta-D-glucosyl-(1&lt;-&gt;1)-ceramide + N-acetylneuraminate. The enzyme catalyses a ganglioside GM3 (d18:1(4E)) + H2O = a beta-D-Gal-(1-&gt;4)-beta-D-Glc-(1&lt;-&gt;1)-Cer(d18:1(4E)) + N-acetylneuraminate. It carries out the reaction a ganglioside GM2 + H2O = a ganglioside GA2 + N-acetylneuraminate. The catalysed reaction is a ganglioside GM2 (d18:1(4E)) + H2O = a ganglioside GA2 (d18:1(4E)) + N-acetylneuraminate. It catalyses the reaction a ganglioside GD1a + H2O = a ganglioside GM1 + N-acetylneuraminate. The enzyme catalyses a ganglioside GD1a (d18:1(4E)) + H2O = a ganglioside GM1 (d18:1(4E)) + N-acetylneuraminate. It carries out the reaction a ganglioside GD3 + H2O = a ganglioside GM3 + N-acetylneuraminate. The catalysed reaction is a ganglioside GD3 (d18:1(4E)) + H2O = a ganglioside GM3 (d18:1(4E)) + N-acetylneuraminate. In terms of biological role, exo-alpha-sialidase that catalyzes the hydrolytic cleavage of the terminal sialic acid (N-acetylneuraminic acid, Neu5Ac) of a glycan moiety in the catabolism of glycolipids, glycoproteins and oligosacharides. Efficiently hydrolyzes gangliosides including alpha-(2-&gt;3)-sialylated GD1a and GM3 and alpha-(2-&gt;8)-sialylated GD3. Hydrolyzes poly-alpha-(2-&gt;8)-sialylated neural cell adhesion molecule NCAM1 likely at growth cones, suppressing neurite outgrowth in hippocampal neurons. May desialylate sialyl Lewis A and X antigens at the cell surface, down-regulating these glycan epitopes recognized by SELE/E selectin in the initiation of cell adhesion and extravasation. Has sialidase activity toward mucin, fetuin and sialyllactose. This chain is Sialidase-4 (NEU4), found in Homo sapiens (Human).